The primary structure comprises 526 residues: Outer capsid protein VP5 (526 aa).

Positions 1–42 (MGKIIKSLSRFGKKVGNALTSNTAKKIYNTIGKAAERFAESE) are involved in membrane permeabilization.

It belongs to the orbivirus VP5 family.

The protein resides in the virion. VP5 protein is one of the two proteins (with VP2) which constitute the virus particle outer capsid. Acts as a membrane permeabilization protein that mediates release of viral particles from endosomal compartments into the cytoplasm. Permeabilization activity is probably negatively regulated by VP2 and is triggered by endosomal degradation of VP2 and exposure to low pH. The chain is Outer capsid protein VP5 (Segment-6) from Bluetongue virus 13 (isolate USA) (BTV 13).